The sequence spans 901 residues: Vacuolar import and degradation protein 22 (901 aa).

The segment covering 1-10 (MRAMDTQVQS) has biased composition (polar residues). The disordered stretch occupies residues 1–54 (MRAMDTQVQSAERGLVLPPMNSTVSSATAATTATNTDTDTDGDRDEERESLAED). A glycan (N-linked (GlcNAc...) asparagine) is linked at Asn21. A compositionally biased stretch (low complexity) spans 27 to 37 (ATAATTATNTD). The segment at 66–122 (RDRSRYLGHFLGVDKMLEAVKCKYCGVIIRRQGNSISMAEASQTHLWSTHKIDPNAN) adopts a BED-type zinc-finger fold. Zn(2+) contacts are provided by Cys87, Cys90, His110, and His115. N-linked (GlcNAc...) asparagine glycans are attached at residues Asn242 and Asn291. The chain crosses the membrane as a helical span at residues 381 to 401 (YYHNCIISIINSAILPLFGTP). N-linked (GlcNAc...) asparagine glycosylation is found at Asn540, Asn645, Asn649, Asn652, Asn662, Asn669, Asn673, Asn688, and Asn722. A compositionally biased stretch (low complexity) spans 646–677 (NSHNTSNHSNMNIHTDNQTNNINNRSGNNSDN). A disordered region spans residues 646 to 727 (NSHNTSNHSN…NSNNNLSFGS (82 aa)). Basic and acidic residues predominate over residues 679-688 (DNEHDNDNDN). Low complexity predominate over residues 718–727 (NSNNNLSFGS).

Belongs to the VID22 family. Glycosylated.

It localises to the cell membrane. The protein localises to the nucleus. Has a role in the negative regulation of gluconeogenesis. Imports fructose-1,6-bisphosphatase (FBPase) into the intermediate vacuole import and degradation (Vid) vesicles. This is an indirect role and requires cyclophilin A. In Saccharomyces cerevisiae (strain ATCC 204508 / S288c) (Baker's yeast), this protein is Vacuolar import and degradation protein 22 (VID22).